The primary structure comprises 993 residues: General transcription factor II-I repeat domain-containing protein 1 (993 aa).

2 GTF2I-like repeats span residues 117–211 (LGPT…EPKS) and 332–426 (LRET…DGTT). A disordered region spans residues 461-480 (GSRSEKSSISDECEPGTSSE). GTF2I-like repeat units follow at residues 597 to 691 (DGIG…LEDC), 727 to 821 (LSRI…RPDD), and 824 to 918 (ANRL…ICSE). A disordered region spans residues 916-961 (CSEPPKIKNGNTGPKRKRKRVSEGNSISSASSNCSSSSSSSSNMDP). The short motif at 929–936 (PKRKRKRV) is the Nuclear localization signal element. Positions 938 to 961 (EGNSISSASSNCSSSSSSSSNMDP) are enriched in low complexity.

The protein belongs to the TFII-I family. As to quaternary structure, interacts (via repeats 4-5) with foxh1/fast1 (via Fork-head domain). Interacts with smad2 and smad3 (via MH1 domain) in a ligand (activin)-dependent manner. Interacts with pou5f1.1/oct-25 to form a repression complex on the promoters of the gsc and mix2 genes. As to expression, uniformly expressed in the embryo in pre- and early gastrula stages. Enriched in the head region of early neurula through tailbud stages.

The protein resides in the nucleus. Its function is as follows. Transcription factor that activates a subset of organizer-specific genes. Binds to the distal element (DE) of the gsc promoter to regulate its expression. In the presence of pou5f1.1/oct-25, forms a repression complex on the promoter of the gsc and mix2 genes to inhibit their transcription. The polypeptide is General transcription factor II-I repeat domain-containing protein 1 (gtf2ird1) (Xenopus laevis (African clawed frog)).